Here is a 451-residue protein sequence, read N- to C-terminus: Phosphoglucosamine mutase (451 aa).

The active-site Phosphoserine intermediate is serine 102. The Mg(2+) site is built by serine 102, aspartate 243, aspartate 245, and aspartate 247. At serine 102 the chain carries Phosphoserine.

The protein belongs to the phosphohexose mutase family. Mg(2+) serves as cofactor. In terms of processing, activated by phosphorylation.

The catalysed reaction is alpha-D-glucosamine 1-phosphate = D-glucosamine 6-phosphate. In terms of biological role, catalyzes the conversion of glucosamine-6-phosphate to glucosamine-1-phosphate. The chain is Phosphoglucosamine mutase from Sinorhizobium medicae (strain WSM419) (Ensifer medicae).